The following is a 272-amino-acid chain: U11/U12 small nuclear ribonucleoprotein 35 kDa protein (272 aa).

The RRM domain occupies 51-129 (LTLFVSRLSP…REVFVDFELE (79 aa)). Composition is skewed to basic and acidic residues over residues 146 to 162 (GKKE…DRPF) and 190 to 272 (RDRS…EHNR). The interval 146–272 (GKKESGQLRF…RKHRSDEHNR (127 aa)) is disordered. The stretch at 221 to 258 (TKDDKEQNAEHTKRERSREQAKNDKDKEKKDSKRERSR) forms a coiled coil.

The protein resides in the nucleus. This chain is U11/U12 small nuclear ribonucleoprotein 35 kDa protein (snrnp35), found in Xenopus laevis (African clawed frog).